Consider the following 118-residue polypeptide: V-type proton ATPase subunit G 3 (118 aa).

A compositionally biased stretch (polar residues) spans 1 to 12 (MASQSQGIQQLL). The interval 1–37 (MASQSQGIQQLLQAEKRAKDKLEEAKKRKNKRLRQAK) is disordered. Positions 3–53 (SQSQGIQQLLQAEKRAKDKLEEAKKRKNKRLRQAKEEATADIDQYRLKREG) form a coiled coil. The span at 14-26 (AEKRAKDKLEEAK) shows a compositional bias: basic and acidic residues.

The protein belongs to the V-ATPase G subunit family. V-ATPase is a heteromultimeric enzyme made up of two complexes: the ATP-hydrolytic V1 complex and the proton translocation V0 complex. The V1 complex consists of three catalytic AB heterodimers that form a heterohexamer, three peripheral stalks each consisting of EG heterodimers, one central rotor including subunits D and F, and the regulatory subunits C and H. The proton translocation complex V0 consists of the proton transport subunit a, a ring of proteolipid subunits c9c'', rotary subunit d, subunits e and f, and two accessory subunits.

Functionally, subunit of the V1 complex of vacuolar(H+)-ATPase (V-ATPase), a multisubunit enzyme composed of a peripheral complex (V1) that hydrolyzes ATP and a membrane integral complex (V0) that translocates protons. V-ATPase is responsible for acidifying and maintaining the pH of intracellular compartments and in some cell types, is targeted to the plasma membrane, where it is responsible for acidifying the extracellular environment. The polypeptide is V-type proton ATPase subunit G 3 (atp6v1g3) (Xenopus tropicalis (Western clawed frog)).